The following is a 311-amino-acid chain: HPr kinase/phosphorylase (311 aa).

Catalysis depends on residues His136 and Lys157. 151–158 (GDSGIGKS) lines the ATP pocket. A Mg(2+)-binding site is contributed by Ser158. Residue Asp175 is the Proton acceptor; for phosphorylation activity. Proton donor; for dephosphorylation activity of the active site. Residues 199–208 (LEIRGLGIIN) are important for the catalytic mechanism of both phosphorylation and dephosphorylation. Glu200 is a Mg(2+) binding site. Arg241 is an active-site residue. Positions 262-267 (PVRPGR) are important for the catalytic mechanism of dephosphorylation.

It belongs to the HPrK/P family. In terms of assembly, homohexamer. It depends on Mg(2+) as a cofactor.

The enzyme catalyses [HPr protein]-L-serine + ATP = [HPr protein]-O-phospho-L-serine + ADP + H(+). It catalyses the reaction [HPr protein]-O-phospho-L-serine + phosphate + H(+) = [HPr protein]-L-serine + diphosphate. Catalyzes the ATP- as well as the pyrophosphate-dependent phosphorylation of a specific serine residue in HPr, a phosphocarrier protein of the phosphoenolpyruvate-dependent sugar phosphotransferase system (PTS). HprK/P also catalyzes the pyrophosphate-producing, inorganic phosphate-dependent dephosphorylation (phosphorolysis) of seryl-phosphorylated HPr (P-Ser-HPr). The two antagonistic activities of HprK/P are regulated by several intracellular metabolites, which change their concentration in response to the absence or presence of rapidly metabolisable carbon sources (glucose, fructose, etc.) in the growth medium. Therefore, by controlling the phosphorylation state of HPr, HPrK/P is a sensor enzyme that plays a major role in the regulation of carbon metabolism and sugar transport: it mediates carbon catabolite repression (CCR), and regulates PTS-catalyzed carbohydrate uptake and inducer exclusion. This Staphylococcus haemolyticus (strain JCSC1435) protein is HPr kinase/phosphorylase.